Consider the following 487-residue polypeptide: Uronate isomerase (487 aa).

Belongs to the metallo-dependent hydrolases superfamily. Uronate isomerase family.

The enzyme catalyses D-glucuronate = D-fructuronate. It catalyses the reaction aldehydo-D-galacturonate = keto-D-tagaturonate. Its pathway is carbohydrate metabolism; pentose and glucuronate interconversion. The chain is Uronate isomerase from Caulobacter vibrioides (strain ATCC 19089 / CIP 103742 / CB 15) (Caulobacter crescentus).